A 795-amino-acid polypeptide reads, in one-letter code: Delta-1-pyrroline-5-carboxylate synthase (795 aa).

The tract at residues 1–361 is glutamate 5-kinase; that stretch reads MLRHMHRSGV…FFSEVKPAGP (361 aa). Positions 117, 223, and 246 each coordinate substrate. ATP contacts are provided by residues 266–267 and 305–311; these read SD and LGGMEAK. An N6-succinyllysine mark is found at Lys311, Lys347, and Lys550. The segment at 362–795 is gamma-glutamyl phosphate reductase; sequence TVEQQGEMAR…NLPVPQRNFS (434 aa).

The protein in the N-terminal section; belongs to the glutamate 5-kinase family. This sequence in the C-terminal section; belongs to the gamma-glutamyl phosphate reductase family. As to quaternary structure, can form homodimers/multimers.

It localises to the mitochondrion matrix. The enzyme catalyses L-glutamate + ATP = L-glutamyl 5-phosphate + ADP. It catalyses the reaction L-glutamate 5-semialdehyde + phosphate + NADP(+) = L-glutamyl 5-phosphate + NADPH + H(+). It functions in the pathway amino-acid biosynthesis; L-proline biosynthesis; L-glutamate 5-semialdehyde from L-glutamate: step 1/2. Its pathway is amino-acid biosynthesis; L-proline biosynthesis; L-glutamate 5-semialdehyde from L-glutamate: step 2/2. Its activity is regulated as follows. Isoform Short: Inhibited by L-ornithine with a Ki of approximately 0.25 mm. Isoform Long: Insensitive to ornithine inhibition. Thus, the two amino acid insert in the long isoform abolishes feedback inhibition of P5CS activity by L-ornithine. Bifunctional enzyme that converts glutamate to glutamate 5-semialdehyde, an intermediate in the biosynthesis of proline, ornithine and arginine. In Mus musculus (Mouse), this protein is Delta-1-pyrroline-5-carboxylate synthase (Aldh18a1).